Here is a 254-residue protein sequence, read N- to C-terminus: Dolichol-phosphate mannosyltransferase subunit 1 (254 aa).

Residues proline 25, tyrosine 27, glutamate 29, valine 56, aspartate 58, aspartate 111, alanine 112, aspartate 113, arginine 140, and arginine 227 each coordinate GDP-alpha-D-mannose. Residue aspartate 113 coordinates Mg(2+). Aspartate 113 is a Mn(2+) binding site.

This sequence belongs to the glycosyltransferase 2 family. As to quaternary structure, component of the dolichol-phosphate mannose (DPM) synthase complex composed of dpm1, dpm2 and dpm3. Requires Mg(2+) as cofactor. Mn(2+) is required as a cofactor. It depends on Ca(2+) as a cofactor.

Its subcellular location is the endoplasmic reticulum. It carries out the reaction a di-trans,poly-cis-dolichyl phosphate + GDP-alpha-D-mannose = a di-trans,poly-cis-dolichyl beta-D-mannosyl phosphate + GDP. It participates in protein modification; protein glycosylation. Functionally, transfers mannose from GDP-mannose to dolichol monophosphate to form dolichol phosphate mannose (Dol-P-Man) which is the mannosyl donor in pathways leading to N-glycosylation, glycosyl phosphatidylinositol membrane anchoring, and O-mannosylation of proteins; catalytic subunit of the dolichol-phosphate mannose (DPM) synthase complex. This is Dolichol-phosphate mannosyltransferase subunit 1 (dpm1) from Dictyostelium discoideum (Social amoeba).